Reading from the N-terminus, the 115-residue chain is Large ribosomal subunit protein uL24 (115 aa).

The segment at 49–68 is disordered; it reads NMKTKHHPPSKDQEKGSITK.

The protein belongs to the universal ribosomal protein uL24 family. In terms of assembly, part of the 50S ribosomal subunit.

One of two assembly initiator proteins, it binds directly to the 5'-end of the 23S rRNA, where it nucleates assembly of the 50S subunit. Its function is as follows. One of the proteins that surrounds the polypeptide exit tunnel on the outside of the subunit. The chain is Large ribosomal subunit protein uL24 from Phytoplasma australiense.